A 297-amino-acid chain; its full sequence is Manganese efflux system protein MneP (297 aa).

A run of 6 helical transmembrane segments spans residues 12–32 (VALIALIANLILMAGKVFFGL), 43–63 (GIHSAADVVASIAVLAVIGIS), 85–105 (IVGIILVIVSVYILIEAILSF), 111–131 (VPQYSALFAALISYVAKEILY), 155–175 (GDIVASLAAFIGVLLAIIGNS), and 177–197 (GWSYLLYADAIASAIVAYLIF).

It belongs to the cation diffusion facilitator (CDF) transporter (TC 2.A.4) family.

The protein resides in the cell membrane. Its function is as follows. Primary efflux pump for manganese. May prevent manganese intoxication. The protein is Manganese efflux system protein MneP of Bacillus subtilis (strain 168).